The sequence spans 347 residues: Leucine-rich repeat-containing protein 69 (347 aa).

LRR repeat units lie at residues 38–60 (GLKTLVLQNNLIPKVCPELCNLT), 61–82 (QLTTLNLGNNLLEEVPEEMKYL), 84–105 (SLKNLHLSGNRICRFAPGACDG), 108–129 (NLILLNLNNNHLTQLPQEVSRL), 131–153 (SLTYMSINYNQLASIPRELCFLE), 154–175 (NLVELQLNYNQLICIPEEIKFL), 177–199 (KLQKLLLARNNIGVLPEELCDLK), and 200–222 (KLRILDIAGNIIQIFPSGFQDLK).

The protein belongs to the LRRC69 family.

This chain is Leucine-rich repeat-containing protein 69 (LRRC69), found in Homo sapiens (Human).